The primary structure comprises 847 residues: MERPFGCFFILLLISYTVVATFDDEPSFPENADLTKDLEQKCFSINKVDPNLKFENDRLKRAYIALQAWKKAIYSDPFKTTANWVGSDVCSYNGVYCAPALDDDSLTVVAGVDLNHADIAGHLPPELGLMTDLALFHINSNRFCGIIPKSLSKLALMYEFDVSNNRFVGQFPEVSLSWPSLKFLDLRYNEFEGSLPSEIFDKDLDAIFLNNNRFESVIPGTIGKSKASVVTFANNKFSGCIPKSIGNMKNLNEIVFTGNNLTGCFPNEIGLLNNVTVFDASKNGFVGSLPSTLSGLASVEQLDLSHNKLTGFVVDKFCKLPNLDSFKFSYNFFNGEAESCVPGRNNGKQFDDTNNCLQNRPSQKPAKQCLPVVSRPVDCSKDKCSGGSNGGSSPSPNPPRTSEPKPSKPEPVMPKPSDSSKPETPKTPEQPSPKPQPPKHESPKPEEPENKHELPKQKESPKPQPSKPEDSPKPEQPKPEESPKPEQPQIPEPTKPVSPPNEAQGPTPDDPYDASPVKNRRSPPPPKVEDTRVPPPQPPMPSPSPPSPIYSPPPPVHSPPPPVYSSPPPPHVYSPPPPVASPPPPSPPPPVHSPPPPPVFSPPPPVFSPPPPSPVYSPPPPSHSPPPPVYSPPPPTFSPPPTHNTNQPPMGAPTPTQAPTPSSETTQVPTPSSESDQSQILSPVQAPTPVQSSTPSSEPTQVPTPSSSESYQAPNLSPVQAPTPVQAPTTSSETSQVPTPSSESNQSPSQAPTPILEPVHAPTPNSKPVQSPTPSSEPVSSPEQSEEVEAPEPTPVNPSSVPSSSPSTDTSIPPPENNDDDDDGDFVLPPHIGFQYASPPPPMFQGY.

The first 20 residues, 1-20 (MERPFGCFFILLLISYTVVA), serve as a signal peptide directing secretion. LRR repeat units follow at residues 45–71 (INKV…AWKK), 106–130 (LTVV…LGLM), 131–153 (TDLA…SLSK), 155–178 (ALMY…SLSW), 179–202 (PSLK…IFDK), 204–224 (LDAI…TIGK), 226–248 (KASV…IGNM), and 249–273 (KNLN…GLLN). Asn260 and Asn274 each carry an N-linked (GlcNAc...) asparagine glycan. LRR repeat units follow at residues 296–319 (LASV…KFCK) and 321–343 (PNLD…CVPG). The segment at 381–847 (KDKCSGGSNG…SPPPPMFQGY (467 aa)) is disordered. Over residues 438–484 (PKHESPKPEEPENKHELPKQKESPKPQPSKPEDSPKPEQPKPEESPK) the composition is skewed to basic and acidic residues. 2 stretches are compositionally biased toward pro residues: residues 485–499 (PEQP…PVSP) and 533–642 (VPPP…PPPT). The contains the Ser-Pro(4) repeats stretch occupies residues 522–847 (SPPPPKVEDT…SPPPPMFQGY (326 aa)). 3 stretches are compositionally biased toward polar residues: residues 667 to 682 (QVPT…QILS), 688 to 720 (TPVQ…SPVQ), and 726 to 752 (QAPT…SQAP). 2 stretches are compositionally biased toward low complexity: residues 768–783 (PVQS…SSPE) and 797–811 (NPSS…TDTS). Residues 838-847 (SPPPPMFQGY) show a composition bias toward pro residues.

Hydroxylated on proline residues in the S-P-P-P-P repeat. In terms of processing, O-glycosylated on hydroxyprolines. As to expression, expressed in flowers, stamen, pollen, and pollinated carpels (at protein level).

The protein resides in the secreted. Its subcellular location is the cell wall. Its function is as follows. Modulates cell morphogenesis by regulating cell wall formation and assembly, and/or growth polarization. This Arabidopsis thaliana (Mouse-ear cress) protein is Pollen-specific leucine-rich repeat extensin-like protein 2 (PEX2).